We begin with the raw amino-acid sequence, 224 residues long: Cytidylate kinase (224 aa).

10 to 18 (GPSGVGKGT) is an ATP binding site.

It belongs to the cytidylate kinase family. Type 1 subfamily.

Its subcellular location is the cytoplasm. The catalysed reaction is CMP + ATP = CDP + ADP. It catalyses the reaction dCMP + ATP = dCDP + ADP. The polypeptide is Cytidylate kinase (Haemophilus ducreyi (strain 35000HP / ATCC 700724)).